The sequence spans 761 residues: T-box protein 1 (761 aa).

Disordered stretches follow at residues 1–85 (MLGR…QPLT) and 167–210 (QTDP…CSSP). Polar residues-rich tracts occupy residues 37–61 (DLQN…NQAG) and 167–179 (QTDP…FPQA). Composition is skewed to low complexity over residues 180–191 (SPSDLSTTSSQS) and 198–210 (SSPS…CSSP). The T-box DNA-binding region spans 287–456 (LWRKFHEHRT…HNPFAKGFRD (170 aa)). The segment covering 496-510 (TTGFPCQTNPTQRSN) has biased composition (polar residues). Disordered regions lie at residues 496-515 (TTGF…QHEG), 545-612 (SGDA…TPAH), and 637-687 (VCSS…LLTT). Residues 600–612 (GCERSNEKHTPAH) show a composition bias toward basic and acidic residues. The segment covering 637 to 646 (VCSSDNSNPD) has biased composition (polar residues). Residues 656-687 (SPAGSGSPSVTSGTSLFTSGSSAAPSPPLLTT) show a composition bias toward low complexity.

The protein resides in the nucleus. In terms of biological role, probable transcriptional regulator involved in developmental processes. This chain is T-box protein 1 (tbr1), found in Patiria pectinifera (Starfish).